The sequence spans 168 residues: uncharacterized protein (168 aa).

The next 2 helical transmembrane spans lie at asparagine 27–glycine 47 and isoleucine 147–phenylalanine 167.

Its subcellular location is the membrane. This is an uncharacterized protein from Saccharomyces cerevisiae (strain ATCC 204508 / S288c) (Baker's yeast).